Here is a 413-residue protein sequence, read N- to C-terminus: Histidinol-phosphate aminotransferase, chloroplastic (413 aa).

The N-terminal 35 residues, 1 to 35 (MGVIELCNTSSICIGRAKPSCCSIERNQRRRIICM), are a transit peptide targeting the chloroplast. Lys273 carries the N6-(pyridoxal phosphate)lysine modification.

This sequence belongs to the class-II pyridoxal-phosphate-dependent aminotransferase family. Histidinol-phosphate aminotransferase subfamily. In terms of assembly, homodimer. The cofactor is pyridoxal 5'-phosphate. In terms of tissue distribution, mainly expressed in green tissues.

It is found in the plastid. The protein resides in the chloroplast. The catalysed reaction is L-histidinol phosphate + 2-oxoglutarate = 3-(imidazol-4-yl)-2-oxopropyl phosphate + L-glutamate. The protein operates within amino-acid biosynthesis; L-histidine biosynthesis; L-histidine from 5-phospho-alpha-D-ribose 1-diphosphate: step 7/9. The chain is Histidinol-phosphate aminotransferase, chloroplastic (HPA) from Nicotiana tabacum (Common tobacco).